The following is a 642-amino-acid chain: Assimilatory sulfite reductase (ferredoxin), chloroplastic (642 aa).

The transit peptide at 1–61 directs the protein to the chloroplast; sequence MSSTFRAPAG…SSSSSSPIQA (61 aa). The segment at 46–74 is disordered; sequence PVPPSASSSSSSPIQAVSTPAKPETATKR. Positions 503, 509, 549, and 553 each coordinate [4Fe-4S] cluster. Residue Cys553 participates in siroheme binding.

Belongs to the nitrite and sulfite reductase 4Fe-4S domain family. In terms of assembly, monomer. Interacts with ferredoxin. Requires siroheme as cofactor. It depends on [4Fe-4S] cluster as a cofactor. Phosphorylated; this phosphorylation reduces DNA-binding. Present in leaves and roots.

The protein resides in the plastid. Its subcellular location is the chloroplast stroma. The protein localises to the chloroplast nucleoid. It is found in the plastid stroma. It carries out the reaction hydrogen sulfide + 6 oxidized [2Fe-2S]-[ferredoxin] + 3 H2O = sulfite + 6 reduced [2Fe-2S]-[ferredoxin] + 7 H(+). Essential protein with sulfite reductase activity required in assimilatory sulfate reduction pathway during both primary and secondary metabolism and thus involved in development and growth. In terms of biological role, DNA-binding protein that binds to both double-stranded and single-stranded DNA without significant sequence specificity to reversibly repress the transcriptional activity of chloroplast nucleoids by promoting DNA compaction and possibly regulate DNA replication. This is Assimilatory sulfite reductase (ferredoxin), chloroplastic (SIR) from Arabidopsis thaliana (Mouse-ear cress).